A 359-amino-acid chain; its full sequence is MGVLDKIKPGVVYGKELHFLYEICKKEGFAIPSINCIGTNSINAVLEAAKEINSPIMIQFSNSGSAFISGKGLKMEKPQGVSIVGAISGAMHVHLMAEHYGVPVVLHTDHCAKNLLPWVEGLLEYGEKYYSQHKKPLFSSHMLDLSEEPIKENIEISKKFLERMAKIEMFLEIELGITGGEEDGVDNSDRALHELFSTPEDIYYGYSELLKVSPNFQIAAAFGNVHGVYKPGNVKLTPKVLKDGQDYVISKTGVNMAKPVSYVFHGGSGSTIDEINEALSYGVVKMNIDTDTQWAAWEGVLNYYKKNESRLQGQLGDGKDIDIPNKKFYDPRVWLREAEVSMKDRVKIACKNLNNINRN.

Serine 61 serves as a coordination point for D-glyceraldehyde 3-phosphate. Aspartate 109 acts as the Proton donor in catalysis. Residues histidine 110, aspartate 144, glutamate 174, and histidine 226 each contribute to the Zn(2+) site. Glycine 227 lines the dihydroxyacetone phosphate pocket. Histidine 265 contributes to the Zn(2+) binding site. Residues 266–268 and 287–290 each bind dihydroxyacetone phosphate; these read GGS and NIDT.

This sequence belongs to the class II fructose-bisphosphate aldolase family. The cofactor is Zn(2+).

The catalysed reaction is beta-D-fructose 1,6-bisphosphate = D-glyceraldehyde 3-phosphate + dihydroxyacetone phosphate. Its pathway is carbohydrate degradation; glycolysis; D-glyceraldehyde 3-phosphate and glycerone phosphate from D-glucose: step 4/4. In terms of biological role, catalyzes the aldol condensation of dihydroxyacetone phosphate (DHAP or glycerone-phosphate) with glyceraldehyde 3-phosphate (G3P) to form fructose 1,6-bisphosphate (FBP) in gluconeogenesis and the reverse reaction in glycolysis. This Borreliella burgdorferi (strain ATCC 35210 / DSM 4680 / CIP 102532 / B31) (Borrelia burgdorferi) protein is Fructose-bisphosphate aldolase (fba).